The primary structure comprises 241 residues: Transforming protein p29 (241 aa).

The segment at 1–41 is disordered; that stretch reads MPAARAAPAADEPMRDPVAPVRAPALPRPAPGAVAPASGGA. 2 S-palmitoyl cysteine; by host lipidation sites follow: Cys-233 and Cys-236. Cys-238 bears the Cysteine methyl ester; by host mark. The S-farnesyl cysteine; by host moiety is linked to residue Cys-238. A propeptide spans 239–241 (removed in mature form); the sequence is VLS.

Belongs to the small GTPase superfamily. Ras family.

It localises to the host cell membrane. The catalysed reaction is GTP + H2O = GDP + phosphate + H(+). Alternates between an inactive form bound to GDP and an active form bound to GTP. Activated by a guanine nucleotide-exchange factor (GEF) and inactivated by a GTPase-activating protein (GAP). This Mus musculus (Mouse) protein is Transforming protein p29 (H-RAS).